The primary structure comprises 177 residues: Early nodulin-like protein 6 (177 aa).

The first 23 residues, 1 to 23, serve as a signal peptide directing secretion; that stretch reads MGGQKIVLLSIFVCFYVFSLVSC. The Phytocyanin domain occupies 24–127; the sequence is TEFEAGGENG…GQKMIIKVME (104 aa). Asparagine 41 carries N-linked (GlcNAc...) asparagine glycosylation. Residues cysteine 81 and cysteine 115 are joined by a disulfide bond. Asparagine 149 carries the GPI-anchor amidated asparagine lipid modification. Positions 150–177 are cleaved as a propeptide — removed in mature form; that stretch reads HAVRKTSRFLGAGLVTISILVITVFSLV.

It belongs to the early nodulin-like (ENODL) family. In terms of tissue distribution, confined to flowers.

The protein localises to the cell membrane. Its function is as follows. May act as a carbohydrate transporter. In Arabidopsis thaliana (Mouse-ear cress), this protein is Early nodulin-like protein 6.